Here is an 89-residue protein sequence, read N- to C-terminus: Small ribosomal subunit protein uS15 (89 aa).

It belongs to the universal ribosomal protein uS15 family. In terms of assembly, part of the 30S ribosomal subunit. Forms a bridge to the 50S subunit in the 70S ribosome, contacting the 23S rRNA.

One of the primary rRNA binding proteins, it binds directly to 16S rRNA where it helps nucleate assembly of the platform of the 30S subunit by binding and bridging several RNA helices of the 16S rRNA. Its function is as follows. Forms an intersubunit bridge (bridge B4) with the 23S rRNA of the 50S subunit in the ribosome. This Aliivibrio salmonicida (strain LFI1238) (Vibrio salmonicida (strain LFI1238)) protein is Small ribosomal subunit protein uS15.